We begin with the raw amino-acid sequence, 485 residues long: Glutamate--tRNA ligase (485 aa).

The 'HIGH' region motif lies at 11–21 (PSPTGYMHVGN). 4 residues coordinate Zn(2+): Cys-108, Cys-110, Cys-135, and Asp-137. The 'KMSKS' region motif lies at 252-256 (KLSKR). Lys-255 lines the ATP pocket.

It belongs to the class-I aminoacyl-tRNA synthetase family. Glutamate--tRNA ligase type 1 subfamily. As to quaternary structure, monomer. Zn(2+) is required as a cofactor.

It is found in the cytoplasm. It carries out the reaction tRNA(Glu) + L-glutamate + ATP = L-glutamyl-tRNA(Glu) + AMP + diphosphate. In terms of biological role, catalyzes the attachment of glutamate to tRNA(Glu) in a two-step reaction: glutamate is first activated by ATP to form Glu-AMP and then transferred to the acceptor end of tRNA(Glu). This is Glutamate--tRNA ligase from Clostridium botulinum (strain Loch Maree / Type A3).